A 558-amino-acid polypeptide reads, in one-letter code: Cytochrome P450 monooxygenase grgG (558 aa).

The helical transmembrane segment at 11–31 (PASFIYFPLLILVGHALIFIL) threads the bilayer. Heme is bound at residue C470.

This sequence belongs to the cytochrome P450 family. Heme is required as a cofactor.

The protein resides in the membrane. Its pathway is secondary metabolite biosynthesis. Cytochrome P450 monooxygenase; part of the gene cluster that mediates the biosynthesis of gregatin A, a fungal polyketide featuring an alkylated furanone core. The PKS grgA synthesizes C11 and C4 polyketide chains in the presence and absence of the trans-enoyl reductase grgB, respectively. The polyketide transferase grgF is then responsible for the fusion of the two carbon chains to produce the furanone skeleton of gregatin A. Next, the cytochrome P450 monooxygenase grgG performs the oxidative cyclization to furnish the gregatin scaffold and leads to the formation of desmethylgregatin A. In this transformation, grgG initially abstracts a hydrogen atom from C-8 to generate a substrate radical, from which one electron is transferred to the iron-heme center to yield a carbocationic species. Heterocyclization along with double-bond isomerizations provides desmethylgregatin A with the furanone ring. Alternatively, grgG might provide hydroxylation at the C-8 radical, which is followed by dehydration to give the cyclized desmethylgregatin A. Finally, the O-methyltransferase grgD methylates the carboxyl group of desmethylgregatin A to provide gregatin A. The protein is Cytochrome P450 monooxygenase grgG (grgG) of Penicillium sp.